The following is a 202-amino-acid chain: Glycerol-3-phosphate acyltransferase (202 aa).

5 consecutive transmembrane segments (helical) span residues 3–23, 51–71, 74–94, 116–136, and 140–160; these read ILLA…VVVS, KAAI…VWLV, FGIG…LGHL, AVHP…AFFF, and SLAA…LFGT.

Belongs to the PlsY family. Probably interacts with PlsX.

Its subcellular location is the cell inner membrane. It catalyses the reaction an acyl phosphate + sn-glycerol 3-phosphate = a 1-acyl-sn-glycero-3-phosphate + phosphate. It participates in lipid metabolism; phospholipid metabolism. Functionally, catalyzes the transfer of an acyl group from acyl-phosphate (acyl-PO(4)) to glycerol-3-phosphate (G3P) to form lysophosphatidic acid (LPA). This enzyme utilizes acyl-phosphate as fatty acyl donor, but not acyl-CoA or acyl-ACP. This chain is Glycerol-3-phosphate acyltransferase, found in Burkholderia thailandensis (strain ATCC 700388 / DSM 13276 / CCUG 48851 / CIP 106301 / E264).